We begin with the raw amino-acid sequence, 449 residues long: Glutamate--tRNA ligase (449 aa).

Residues 10–20 (PSPTGFLHIGN) carry the 'HIGH' region motif. A 'KMSKS' region motif is present at residues 214-218 (KLSKR). Lys-217 provides a ligand contact to ATP.

This sequence belongs to the class-I aminoacyl-tRNA synthetase family. Glutamate--tRNA ligase type 1 subfamily. In terms of assembly, monomer.

Its subcellular location is the cytoplasm. It carries out the reaction tRNA(Glu) + L-glutamate + ATP = L-glutamyl-tRNA(Glu) + AMP + diphosphate. Functionally, catalyzes the attachment of glutamate to tRNA(Glu) in a two-step reaction: glutamate is first activated by ATP to form Glu-AMP and then transferred to the acceptor end of tRNA(Glu). The protein is Glutamate--tRNA ligase of Onion yellows phytoplasma (strain OY-M).